The primary structure comprises 327 residues: Urokinase plasminogen activator surface receptor (327 aa).

Residues 1–23 (MGLPRRLLLLLLLATTCVPASQG) form the signal peptide. UPAR/Ly6 domains lie at 24–117 (LQCM…GRYL), 117–212 (LECA…PPNG), and 213–298 (FQCY…SPTG). Cystine bridges form between Cys26-Cys47, Cys29-Cys35, and Cys40-Cys68. N-linked (GlcNAc...) asparagine glycosylation occurs at Asn32. N-linked (GlcNAc...) asparagine glycosylation is present at Asn75. Cystine bridges form between Cys94–Cys99, Cys119–Cys146, Cys122–Cys129, Cys139–Cys168, Cys174–Cys191, Cys192–Cys197, Cys215–Cys243, Cys218–Cys226, Cys236–Cys262, Cys268–Cys287, and Cys288–Cys293. Residues Asn183, Asn193, Asn221, Asn254, and Asn282 are each glycosylated (N-linked (GlcNAc...) asparagine). The GPI-anchor amidated glycine moiety is linked to residue Gly298. Residues 299 to 327 (GAPRPGPAQLSLIASLLLTLGLWGVLLWT) constitute a propeptide, removed in mature form.

Monomer. Interacts (via the UPAR/Ly6 domains) with SRPX2. Interacts with MRC2. Interacts with SORL1 (via N-terminal ectodomain); this interaction decreases PLAUR internalization. The ternary complex composed of PLAUR-PLAU-SERPINE1 also interacts with SORL1. Interacts with CD82; this interaction prevents PLAUR from binding to its high affinity ligand PLAU. As to expression, expressed in angiogenic endothelial cells (at protein level).

The protein localises to the cell membrane. Its subcellular location is the secreted. In terms of biological role, acts as a receptor for urokinase plasminogen activator. Plays a role in localizing and promoting plasmin formation. Mediates the proteolysis-independent signal transduction activation effects of U-PA. This Mus musculus (Mouse) protein is Urokinase plasminogen activator surface receptor (Plaur).